A 108-amino-acid chain; its full sequence is Replication restart protein PriB (108 aa).

In terms of domain architecture, SSB spans 8–108 (IDNSFSVMGV…LHAEQIEFID (101 aa)).

The protein belongs to the PriB family. In terms of assembly, homodimer. Interacts with PriA and DnaT. Component of the replication restart primosome. Primosome assembly occurs via a 'hand-off' mechanism. PriA binds to replication forks, subsequently PriB then DnaT bind; DnaT then displaces ssDNA to generate the helicase loading substrate.

Functionally, involved in the restart of stalled replication forks, which reloads the replicative helicase on sites other than the origin of replication; the PriA-PriB pathway is the major replication restart pathway. During primosome assembly it facilitates complex formation between PriA and DnaT on DNA; stabilizes PriA on DNA. Stimulates the DNA unwinding activity of PriA helicase. The protein is Replication restart protein PriB of Haemophilus influenzae (strain ATCC 51907 / DSM 11121 / KW20 / Rd).